We begin with the raw amino-acid sequence, 149 residues long: 3-hydroxyacyl-[acyl-carrier-protein] dehydratase FabZ (149 aa).

The active site involves histidine 53.

This sequence belongs to the thioester dehydratase family. FabZ subfamily.

The protein localises to the cytoplasm. It carries out the reaction a (3R)-hydroxyacyl-[ACP] = a (2E)-enoyl-[ACP] + H2O. In terms of biological role, involved in unsaturated fatty acids biosynthesis. Catalyzes the dehydration of short chain beta-hydroxyacyl-ACPs and long chain saturated and unsaturated beta-hydroxyacyl-ACPs. The sequence is that of 3-hydroxyacyl-[acyl-carrier-protein] dehydratase FabZ from Neisseria meningitidis serogroup C / serotype 2a (strain ATCC 700532 / DSM 15464 / FAM18).